Here is a 190-residue protein sequence, read N- to C-terminus: Putative acetyltransferase DDB_G0275913 (190 aa).

The protein belongs to the transferase hexapeptide repeat family.

This is Putative acetyltransferase DDB_G0275913 from Dictyostelium discoideum (Social amoeba).